A 298-amino-acid polypeptide reads, in one-letter code: Protease HtpX (298 aa).

Helical transmembrane passes span 4–24 and 38–58; these read IGLF…TMNL and LGNL…VSLA. A Zn(2+)-binding site is contributed by His-145. Glu-146 is an active-site residue. His-149 lines the Zn(2+) pocket. The next 2 helical transmembrane spans lie at 160–180 and 194–214; these read LLQG…AYVV and ITFI…ASMI. Position 223 (Glu-223) interacts with Zn(2+).

This sequence belongs to the peptidase M48B family. Zn(2+) is required as a cofactor.

Its subcellular location is the cell inner membrane. In Hydrogenovibrio crunogenus (strain DSM 25203 / XCL-2) (Thiomicrospira crunogena), this protein is Protease HtpX.